Consider the following 434-residue polypeptide: Alpha-enolase (434 aa).

Ser-40 is a binding site for Mg(2+). Substrate contacts are provided by His-158 and Glu-167. Glu-210 functions as the Proton donor in the catalytic mechanism. Positions 245, 293, and 318 each coordinate Mg(2+). 2 residues coordinate substrate: Glu-293 and Asp-318. Lys-343 serves as the catalytic Proton acceptor. Substrate is bound by residues Ser-370 to Ser-373 and Lys-394.

This sequence belongs to the enolase family. As to quaternary structure, homodimer. Requires Mg(2+) as cofactor.

The protein resides in the cytoplasm. It carries out the reaction (2R)-2-phosphoglycerate = phosphoenolpyruvate + H2O. The protein operates within carbohydrate degradation; glycolysis; pyruvate from D-glyceraldehyde 3-phosphate: step 4/5. In terms of biological role, both an enzyme and a lens structural protein. The protein is Alpha-enolase (ENO1) of Anas platyrhynchos (Mallard).